Here is a 144-residue protein sequence, read N- to C-terminus: Putative pre-16S rRNA nuclease (144 aa).

Belongs to the YqgF nuclease family.

It is found in the cytoplasm. Could be a nuclease involved in processing of the 5'-end of pre-16S rRNA. The protein is Putative pre-16S rRNA nuclease of Wigglesworthia glossinidia brevipalpis.